The chain runs to 640 residues: MSRVIGIDLGTTNSCVAVMEGGEPVVIANAEGSRTTPSMIAFAESGERLVGQQAKRQAVTNPENTLYAIKRLIGRKFETEAVKKDIAISPFKIVKADNSDAWVEVRGQKYSPPEISAMVLQKMKKTAEDYLGEAVTDAVITVPAYFDDSQRQATKDAGKIAGLNVLRIINEPTAAALAYGLDKKKDEKIAVFDLGGGTFDVSILELGEGVFEVKSTNGDTFLGGEDFDQKIIDHIADEFKKDQGIDLRGDKMALQRLKEAGEKAKCELSTSLETDINLPFITADASGPKHLTMKLTRAKLESICAELIAKLEGPCRTALKDAGLSASDIDEVILVGGMTRMPIVQKKVQDIFGKLPNRGVNPDEVVAIGAAIQGGVLRGDVKDVLLLDVTPLSLGIETLGGVLTKLIDKNSTIPCRKSQVFSTAADNQPAVSIHVLQGEREMAADNKTLGNFELSGIPAAPRGVPQIEVTFDIDANGIVHVSAKDLGTGKEQSIRITASSGLSKEEVEKMVREAEAHAADDKKKRELIEAKNQADNLIYQTEKSLTEFGDKIDASEKQKIEEGVAALKKALEGSDADEIKKASDSLMQASHKLAEAVYAKTQGAGAEGGEQPHGEQEAGGAAKGEKVVDADFEEVKDDKK.

Thr198 bears the Phosphothreonine; by autocatalysis mark. The tract at residues 600 to 640 (KTQGAGAEGGEQPHGEQEAGGAAKGEKVVDADFEEVKDDKK) is disordered. Over residues 630 to 640 (ADFEEVKDDKK) the composition is skewed to acidic residues.

It belongs to the heat shock protein 70 family.

Functionally, acts as a chaperone. This chain is Chaperone protein DnaK, found in Citrifermentans bemidjiense (strain ATCC BAA-1014 / DSM 16622 / JCM 12645 / Bem) (Geobacter bemidjiensis).